Consider the following 317-residue polypeptide: Metaxin-1 (317 aa).

Residues lysine 38, lysine 41, and lysine 78 each participate in a glycyl lysine isopeptide (Lys-Gly) (interchain with G-Cter in ubiquitin) cross-link. The chain crosses the membrane as a helical span at residues 164–184 (EELEKELYQEAQECLTLLSQR).

This sequence belongs to the metaxin family. As to quaternary structure, interacts with MTX2/metaxin-2. Associates with the mitochondrial contact site and cristae organizing system (MICOS) complex, composed of at least MICOS10/MIC10, CHCHD3/MIC19, CHCHD6/MIC25, APOOL/MIC27, IMMT/MIC60, APOO/MIC23/MIC26 and QIL1/MIC13. This complex was also known under the names MINOS or MitOS complex. The MICOS complex associates with mitochondrial outer membrane proteins SAMM50, MTX1 and MTX2 (together described as components of the mitochondrial outer membrane sorting assembly machinery (SAM) complex) and DNAJC11, mitochondrial inner membrane protein TMEM11 and with HSPA9. The MICOS and SAM complexes together with DNAJC11 are part of a large protein complex spanning both membranes termed the mitochondrial intermembrane space bridging (MIB) complex. Interacts with ARMC1. In terms of processing, ubiquitinated by PRKN during mitophagy, leading to its degradation and enhancement of mitophagy. Deubiquitinated by USP30.

Its subcellular location is the mitochondrion outer membrane. In terms of biological role, involved in transport of proteins into the mitochondrion. Essential for embryonic development. This Bos taurus (Bovine) protein is Metaxin-1 (MTX1).